The sequence spans 921 residues: Sodium/calcium exchanger 2 (921 aa).

The first 20 residues, 1–20, serve as a signal peptide directing secretion; that stretch reads MAPLALMGVVLLLGVPHCLG. Residues 23–42 form a disordered region; the sequence is TPTPSLPPPTANDSDASPEG. The chain crosses the membrane as a helical span at residues 69–89; that stretch reads VARAVVYFVAMVYMFLGVSII. N-linked (GlcNAc...) asparagine glycans are attached at residues Asn-125 and Asn-130. A run of 4 helical transmembrane segments spans residues 131–151, 165–185, 197–217, and 226–246; these read LTLMALGSSAPEILLTVIEVC, IVGSAAFNMFVVIAVCVYVIP, VFFVTASWSIFAYVWLYLILA, and VWEALLTLIFFPVCVVFAWMA. The segment at 248 to 267 is putative calmodulin-binding region; sequence KRLLFYKYVYKRYRTDPRSG. A disordered region spans residues 371–391; that stretch reads HAADAARRPGATDGAPDDEDD. 2 Calx-beta domains span residues 389–482 and 512–611; these read EDDG…FVRL and ATVT…FIEL. The Ca(2+) site is built by Glu-407, Asp-443, Asp-468, Asp-469, Ile-471, Glu-473, Glu-476, Asp-518, Asp-519, Asp-520, Glu-536, Asp-598, Glu-599, and Glu-600. At Ser-622 the chain carries Phosphoserine. Residue Glu-665 coordinates Ca(2+). 6 helical membrane passes run 721–741, 749–769, 786–806, 823–843, 855–875, and 893–913; these read CFDYVMHFLTVFWKVLFACVP, WACFGVCILVIGVLTALIGDL, VVFVALGTSIPDTFASKVAAL, AVNVFLGLGVAWSVAAVYWAV, LAFSVTLFTVFAFVCIAVLLY, and LATTALFLGLWFLYILFSSLE.

This sequence belongs to the Ca(2+):cation antiporter (CaCA) (TC 2.A.19) family. SLC8 subfamily. As to expression, detected in kidney cortex, in distal convoluted tubules and connecting segments. Detected in brain and spinal cord (at protein level). Detected in brain, especially in hippocampus CA1, CA2 and CA3 fiels, dentate gyrus, cerebellum and brain cortex.

Its subcellular location is the cell membrane. It localises to the basolateral cell membrane. It carries out the reaction Ca(2+)(in) + 3 Na(+)(out) = Ca(2+)(out) + 3 Na(+)(in). With respect to regulation, calcium transport is down-regulated by Na(+) and stimulated by Ca(2+). Functionally, mediates the electrogenic exchange of Ca(2+) against Na(+) ions across the cell membrane, and thereby contributes to the regulation of cytoplasmic Ca(2+) levels and Ca(2+)-dependent cellular processes. Contributes to cellular Ca(2+) homeostasis in excitable cells. Contributes to the rapid decrease of cytoplasmic Ca(2+) levels back to baseline after neuronal activation, and thereby contributes to modulate synaptic plasticity, learning and memory. Plays a role in regulating urinary Ca(2+) and Na(+) excretion. This chain is Sodium/calcium exchanger 2, found in Mus musculus (Mouse).